The primary structure comprises 345 residues: Serine/arginine-rich splicing factor 6 (345 aa).

The 72-residue stretch at Met1–Gly72 folds into the RRM 1 domain. Residues Ser45, Ser81, and Ser84 each carry the phosphoserine modification. Positions Arg75–Tyr102 are disordered. Positions Phe110–Pro183 constitute an RRM 2 domain. The residue at position 165 (Lys165) is an N6-acetyllysine. The tract at residues Ile176–Asp345 is disordered. Residue Lys182 forms a Glycyl lysine isopeptide (Lys-Gly) (interchain with G-Cter in SUMO2) linkage. Basic residues predominate over residues Thr185–Lys250. Basic and acidic residues-rich tracts occupy residues Arg264 to Arg273 and Ser282 to Ser293. A phosphoserine mark is found at Ser299 and Ser301. The residue at position 305 (Ser305) is a Phosphoserine; by DYRK1A. Residues Ser316 and Ser318 each carry the phosphoserine modification. The span at Arg323 to Asp345 shows a compositional bias: basic residues.

It belongs to the splicing factor SR family. As to quaternary structure, binds SREK1/SFRS12. Interacts with DYRK1A. Extensively phosphorylated on serine residues in the RS domain. Phosphorylated by DYRK1A, probably in the RS domain. Phosphorylation by DYRK1A modulates alternative splice site selection and inhibits the expression of MAPT/Tau exon 10.

The protein resides in the nucleus. It localises to the nucleus speckle. Its function is as follows. Plays a role in constitutive splicing and modulates the selection of alternative splice sites. Plays a role in the alternative splicing of MAPT/Tau exon 10. Binds to alternative exons of TNC pre-mRNA and promotes the expression of alternatively spliced TNC. Plays a role in wound healing and in the regulation of keratinocyte differentiation and proliferation via its role in alternative splicing. The chain is Serine/arginine-rich splicing factor 6 (SRSF6) from Bos taurus (Bovine).